The sequence spans 284 residues: Bifunctional protein FolD (284 aa).

NADP(+) is bound by residues 165-167 and S190; that span reads GRS.

The protein belongs to the tetrahydrofolate dehydrogenase/cyclohydrolase family. As to quaternary structure, homodimer.

It carries out the reaction (6R)-5,10-methylene-5,6,7,8-tetrahydrofolate + NADP(+) = (6R)-5,10-methenyltetrahydrofolate + NADPH. The enzyme catalyses (6R)-5,10-methenyltetrahydrofolate + H2O = (6R)-10-formyltetrahydrofolate + H(+). The protein operates within one-carbon metabolism; tetrahydrofolate interconversion. In terms of biological role, catalyzes the oxidation of 5,10-methylenetetrahydrofolate to 5,10-methenyltetrahydrofolate and then the hydrolysis of 5,10-methenyltetrahydrofolate to 10-formyltetrahydrofolate. This chain is Bifunctional protein FolD, found in Streptococcus sanguinis (strain SK36).